Consider the following 471-residue polypeptide: 5-hydroxytryptamine receptor 2A (471 aa).

At 1-80 (MEILCEDNIS…LQEKNWSALL (80 aa)) the chain is on the extracellular side. 5 N-linked (GlcNAc...) asparagine glycosylation sites follow: N8, N38, N44, N51, and N54. A helical transmembrane segment spans residues 81 to 97 (TTVVIILTIAGNILVIM). Residues 98–111 (AVSLEKKLQNATNY) lie on the Cytoplasmic side of the membrane. Residues 112–137 (FLMSLAIADMLLGFLVMPVSMLTILY) traverse the membrane as a helical segment. The Extracellular portion of the chain corresponds to 138–146 (GYRWPLPSK). Residues 147–171 (LCAIWIYLDVLFSTASIMHLCAISL) form a helical membrane-spanning segment. Residues C148 and C227 are joined by a disulfide bond. D155 is a serotonin binding site. The DRY motif; important for ligand-induced conformation changes motif lies at 172–174 (DRY). Topologically, residues 172–191 (DRYVAIQNPIHHSRFNSRTK) are cytoplasmic. Residues 192–215 (AFLKIIAVWTISVGISMPIPVFGL) traverse the membrane as a helical segment. Residues 216 to 232 (QDDSKVFKEGSCLLADD) are Extracellular-facing. The helical transmembrane segment at 233 to 258 (NFVLIGSFVAFFIPLTIMVITYFLTI) threads the bilayer. Topologically, residues 259-322 (KSLQKEATLC…QSISNEQKAC (64 aa)) are cytoplasmic. Position 280 is a phosphoserine (S280). The chain crosses the membrane as a helical span at residues 323–348 (KVLGIVFFLFVVMWCPFFITNIMAVI). Position 343 (N343) interacts with serotonin. Cysteines 349 and 353 form a disulfide. Topologically, residues 349-356 (CKESCNEN) are extracellular. A helical transmembrane segment spans residues 357-382 (VIGALLNVFVWIGYLSSAVNPLVYTL). Positions 376–380 (NPLVY) match the NPxxY motif; important for ligand-induced conformation changes and signaling motif. Residues 383–471 (FNKTYRSAFS…ETVNEKVSCV (89 aa)) lie on the Cytoplasmic side of the membrane. The short motif at 469–471 (SCV) is the PDZ-binding element.

It belongs to the G-protein coupled receptor 1 family. As to quaternary structure, interacts (via C-terminus) with MPDZ and PATJ. May interact (via C-terminus) with MPP3, PRDX6, DLG4, DLG1, CASK, APBA1 and MAGI2. Interacts with GRM2 and DRD2; this may affect signaling. In terms of tissue distribution, detected in adult intestine, especially in mucosal epithelium, longitudinal and circular layers of muscularis externa and myenteric plexuses. Highly expressed in Paneth cells, and detected at lower levels in enterocytes (at protein level). Detected in brain cortex.

It is found in the cell membrane. Its subcellular location is the cell projection. The protein localises to the axon. It localises to the cytoplasmic vesicle. The protein resides in the membrane. It is found in the caveola. Its subcellular location is the dendrite. The protein localises to the presynapse. Its activity is regulated as follows. G-protein coupled receptor activity is regulated by lipids: oleamide increases HTR2A-mediated activity. Its function is as follows. G-protein coupled receptor for 5-hydroxytryptamine (serotonin). Also functions as a receptor for various drugs and psychoactive substances, including mescaline, psilocybin, 1-(2,5-dimethoxy-4-iodophenyl)-2-aminopropane (DOI) and lysergic acid diethylamide (LSD). Ligand binding causes a conformation change that triggers signaling via guanine nucleotide-binding proteins (G proteins) and modulates the activity of downstream effectors. HTR2A is coupled to G(q)/G(11) G alpha proteins and activates phospholipase C-beta, releasing diacylglycerol (DAG) and inositol 1,4,5-trisphosphate (IP3) second messengers that modulate the activity of phosphatidylinositol 3-kinase and promote the release of Ca(2+) ions from intracellular stores, respectively. Beta-arrestin family members inhibit signaling via G proteins and mediate activation of alternative signaling pathways. Affects neural activity, perception, cognition and mood. Plays a role in the regulation of behavior, including responses to anxiogenic situations and psychoactive substances. Plays a role in intestinal smooth muscle contraction, and may play a role in arterial vasoconstriction. This chain is 5-hydroxytryptamine receptor 2A (Htr2a), found in Rattus norvegicus (Rat).